The chain runs to 273 residues: 4-hydroxy-tetrahydrodipicolinate reductase (273 aa).

Residues glycine 11–methionine 16 and glutamate 36 contribute to the NAD(+) site. Arginine 37 provides a ligand contact to NADP(+). Residues glycine 100–threonine 102 and alanine 124–tyrosine 127 contribute to the NAD(+) site. Histidine 157 acts as the Proton donor/acceptor in catalysis. Histidine 158 serves as a coordination point for (S)-2,3,4,5-tetrahydrodipicolinate. Residue lysine 161 is the Proton donor of the active site. (S)-2,3,4,5-tetrahydrodipicolinate is bound at residue glycine 167–threonine 168.

The protein belongs to the DapB family.

Its subcellular location is the cytoplasm. It catalyses the reaction (S)-2,3,4,5-tetrahydrodipicolinate + NAD(+) + H2O = (2S,4S)-4-hydroxy-2,3,4,5-tetrahydrodipicolinate + NADH + H(+). The enzyme catalyses (S)-2,3,4,5-tetrahydrodipicolinate + NADP(+) + H2O = (2S,4S)-4-hydroxy-2,3,4,5-tetrahydrodipicolinate + NADPH + H(+). Its pathway is amino-acid biosynthesis; L-lysine biosynthesis via DAP pathway; (S)-tetrahydrodipicolinate from L-aspartate: step 4/4. Its function is as follows. Catalyzes the conversion of 4-hydroxy-tetrahydrodipicolinate (HTPA) to tetrahydrodipicolinate. The sequence is that of 4-hydroxy-tetrahydrodipicolinate reductase from Acinetobacter baumannii (strain ACICU).